The following is an 85-amino-acid chain: Large ribosomal subunit protein bL27 (85 aa).

The tract at residues 1 to 20 (MAHKKAAGSSRNGRDSNPKM) is disordered.

This sequence belongs to the bacterial ribosomal protein bL27 family.

This Psychrobacter arcticus (strain DSM 17307 / VKM B-2377 / 273-4) protein is Large ribosomal subunit protein bL27.